A 285-amino-acid chain; its full sequence is Chromatin modification-related protein YNG2 (285 aa).

The stretch at 19–54 (LEVKHLLQELKNKDVQLQEARKRYQTKDNQIHKFIR) forms a coiled coil. Residues 138–165 (NGLSDNLSGTTTPRGHSASTPVADNAAN) are compositionally biased toward polar residues. Residues 138–218 (NGLSDNLSGT…SRPNEGPGNN (81 aa)) form a disordered region. Residues 193-207 (MKSEDFEDKKYDNDS) show a composition bias toward basic and acidic residues. The PHD-type zinc-finger motif lies at 225–276 (NLYCFCQRVSFGEMIGCDNDDCKFEWFHWSCVGITAPPKDDEIWYCPDCAPK). Zn(2+) contacts are provided by Cys228, Cys230, Cys241, Cys246, His252, Cys255, Cys270, and Cys273.

The protein belongs to the ING family. As to quaternary structure, interacts with H3K4me3 and to a lesser extent with H3K4me2. Component of the NuA4 histone acetyltransferase complex.

The protein localises to the nucleus. Its function is as follows. Component of the NuA4 histone acetyltransferase complex which is involved in transcriptional activation of selected genes principally by acetylation of nucleosomal histone H4 and H2A. The NuA4 complex is also involved in DNA repair. Involved in cell cycle progression and meiosis. This chain is Chromatin modification-related protein YNG2 (YNG2), found in Debaryomyces hansenii (strain ATCC 36239 / CBS 767 / BCRC 21394 / JCM 1990 / NBRC 0083 / IGC 2968) (Yeast).